We begin with the raw amino-acid sequence, 164 residues long: Phosphatidyl-N-methylethanolamine N-methyltransferase (164 aa).

An intramembrane region (helical) is located at residues 1–21 (MGLLAAIGVLLPFPFYWWLWT). At 22 to 30 (NAQSWVNLC) the chain is on the lumenal side. A helical transmembrane segment spans residues 31 to 52 (GRERDPSTVMARVSHVLKAAQL). Residues 53–69 (LSLFSVASLSWPPPLYF) are Cytoplasmic-facing. Residues 70–90 (WPLMAFGQFLNFRVYQLLGEA) form a helical membrane-spanning segment. 74–76 (AFG) is a binding site for S-adenosyl-L-methionine. Topologically, residues 91-131 (GTYYGVRFGKNIPWVTEFPFGVIRDPQYVGSIMSLLACLSW) are lumenal. The helical transmembrane segment at 132-151 (VPFQYILLWSLGYVFMMFLE) threads the bilayer. Residues 152-164 (SKEDPNARAKSIS) lie on the Cytoplasmic side of the membrane. S-adenosyl-L-methionine is bound at residue 154–155 (ED).

This sequence belongs to the class VI-like SAM-binding methyltransferase superfamily. PEMT/PEM2 methyltransferase family.

It localises to the endoplasmic reticulum membrane. It catalyses the reaction a 1,2-diacyl-sn-glycero-3-phospho-N-methylethanolamine + S-adenosyl-L-methionine = a 1,2-diacyl-sn-glycero-3-phospho-N,N-dimethylethanolamine + S-adenosyl-L-homocysteine + H(+). The enzyme catalyses a 1,2-diacyl-sn-glycero-3-phospho-N,N-dimethylethanolamine + S-adenosyl-L-methionine = a 1,2-diacyl-sn-glycero-3-phosphocholine + S-adenosyl-L-homocysteine + H(+). The protein operates within phospholipid metabolism; phosphatidylcholine biosynthesis. Functionally, catalyzes the second two steps of the methylation pathway of phosphatidylcholine biosynthesis, the SAM-dependent methylation of phosphatidylmonomethylethanolamine (PMME) to phosphatidyldimethylethanolamine (PDME) and of PDME to phosphatidylcholine (PC). The chain is Phosphatidyl-N-methylethanolamine N-methyltransferase (PLMT) from Arabidopsis thaliana (Mouse-ear cress).